The following is a 431-amino-acid chain: UDP-N-acetylmuramate--L-alanine ligase (431 aa).

108-114 (GAHGKST) is a binding site for ATP.

It belongs to the MurCDEF family.

The protein resides in the cytoplasm. It catalyses the reaction UDP-N-acetyl-alpha-D-muramate + L-alanine + ATP = UDP-N-acetyl-alpha-D-muramoyl-L-alanine + ADP + phosphate + H(+). It participates in cell wall biogenesis; peptidoglycan biosynthesis. Functionally, cell wall formation. The protein is UDP-N-acetylmuramate--L-alanine ligase of Campylobacter jejuni subsp. doylei (strain ATCC BAA-1458 / RM4099 / 269.97).